Here is a 140-residue protein sequence, read N- to C-terminus: Small ribosomal subunit protein uS12 (140 aa).

A 3-methylthioaspartic acid modification is found at aspartate 102. The tract at residues 121–140 (ANRQQSRSKYGAKKPKAAKK) is disordered. A compositionally biased stretch (basic residues) spans 130-140 (YGAKKPKAAKK).

It belongs to the universal ribosomal protein uS12 family. Part of the 30S ribosomal subunit. Contacts proteins S8 and S17. May interact with IF1 in the 30S initiation complex.

In terms of biological role, with S4 and S5 plays an important role in translational accuracy. Its function is as follows. Interacts with and stabilizes bases of the 16S rRNA that are involved in tRNA selection in the A site and with the mRNA backbone. Located at the interface of the 30S and 50S subunits, it traverses the body of the 30S subunit contacting proteins on the other side and probably holding the rRNA structure together. The combined cluster of proteins S8, S12 and S17 appears to hold together the shoulder and platform of the 30S subunit. This Alkaliphilus oremlandii (strain OhILAs) (Clostridium oremlandii (strain OhILAs)) protein is Small ribosomal subunit protein uS12.